The chain runs to 86 residues: Large ribosomal subunit protein bL27 (86 aa).

Gly residues predominate over residues 1 to 10 (MAQKKGGGST). Residues 1-21 (MAQKKGGGSTRNGRDSESKRL) form a disordered region.

Belongs to the bacterial ribosomal protein bL27 family.

The sequence is that of Large ribosomal subunit protein bL27 from Bordetella petrii (strain ATCC BAA-461 / DSM 12804 / CCUG 43448).